Reading from the N-terminus, the 107-residue chain is Large ribosomal subunit protein uL24 (107 aa).

This sequence belongs to the universal ribosomal protein uL24 family. As to quaternary structure, part of the 50S ribosomal subunit.

In terms of biological role, one of two assembly initiator proteins, it binds directly to the 5'-end of the 23S rRNA, where it nucleates assembly of the 50S subunit. One of the proteins that surrounds the polypeptide exit tunnel on the outside of the subunit. The protein is Large ribosomal subunit protein uL24 of Malacoplasma penetrans (strain HF-2) (Mycoplasma penetrans).